Consider the following 31-residue polypeptide: Cytochrome b6-f complex subunit 6 (31 aa).

Residues A3–F23 traverse the membrane as a helical segment.

Belongs to the PetL family. As to quaternary structure, the 4 large subunits of the cytochrome b6-f complex are cytochrome b6, subunit IV (17 kDa polypeptide, PetD), cytochrome f and the Rieske protein, while the 4 small subunits are PetG, PetL, PetM and PetN. The complex functions as a dimer.

It is found in the plastid. The protein localises to the chloroplast thylakoid membrane. In terms of biological role, component of the cytochrome b6-f complex, which mediates electron transfer between photosystem II (PSII) and photosystem I (PSI), cyclic electron flow around PSI, and state transitions. PetL is important for photoautotrophic growth as well as for electron transfer efficiency and stability of the cytochrome b6-f complex. The protein is Cytochrome b6-f complex subunit 6 of Emiliania huxleyi (Coccolithophore).